The following is a 156-amino-acid chain: Arginine repressor (156 aa).

Belongs to the ArgR family.

It localises to the cytoplasm. It participates in amino-acid biosynthesis; L-arginine biosynthesis [regulation]. In terms of biological role, regulates arginine biosynthesis genes. This is Arginine repressor from Shewanella halifaxensis (strain HAW-EB4).